A 403-amino-acid polypeptide reads, in one-letter code: Peroxisomal membrane protein PEX13 (403 aa).

The span at 1-11 shows a compositional bias: pro residues; that stretch reads MASQPPPPPKP. Positions 1–69 are disordered; sequence MASQPPPPPK…SQQTGSGNLN (69 aa). Residues 1-134 are Peroxisomal matrix-facing; sequence MASQPPPPPK…SSRGAFQSIE (134 aa). Polar residues predominate over residues 59 to 69; sequence PSQQTGSGNLN. Residues 135–155 traverse the membrane as a helical segment; that stretch reads SIVHAFASVSMMMDATFSAVY. The targeting to peroxisomes stretch occupies residues 145–233; the sequence is MMMDATFSAV…EDRAANSAKS (89 aa). Over 156–174 the chain is Cytoplasmic; sequence NSFRAVLDVANHFSRLKIH. A helical membrane pass occupies residues 175 to 192; sequence FTKVFSAFALVRTIRYLY. Positions 175–196 are interaction with PEX19; the sequence is FTKVFSAFALVRTIRYLYRRLQ. Residues 193 to 233 lie on the Peroxisomal matrix side of the membrane; it reads RRLQWMIGLRRGLENEDLWAESEGTVACLGAEDRAANSAKS. A helical transmembrane segment spans residues 234-254; the sequence is WPIFLFFAVILGGPYLIWKLL. Residues 255–403 are Cytoplasmic-facing; it reads STHSDEVTDS…TGKNGDKQDL (149 aa). The SH3 domain maps to 272–336; it reads DDHVVARAEY…PANYVKILGK (65 aa). At Ser354 the chain carries Phosphoserine.

It belongs to the peroxin-13 family. Interacts (via SH3 domain) with PEX14 (via SH3-binding motif); forming the PEX13-PEX14 docking complex. Interacts with PEX19.

It is found in the peroxisome membrane. Component of the PEX13-PEX14 docking complex, a translocon channel that specifically mediates the import of peroxisomal cargo proteins bound to PEX5 receptor. The PEX13-PEX14 docking complex forms a large import pore which can be opened to a diameter of about 9 nm. Mechanistically, PEX5 receptor along with cargo proteins associates with the PEX14 subunit of the PEX13-PEX14 docking complex in the cytosol, leading to the insertion of the receptor into the organelle membrane with the concomitant translocation of the cargo into the peroxisome matrix. Involved in the import of PTS1- and PTS2-type containing proteins. The polypeptide is Peroxisomal membrane protein PEX13 (PEX13) (Bos taurus (Bovine)).